Reading from the N-terminus, the 626-residue chain is (+)-3-carene synthase 2, chloroplastic (626 aa).

The N-terminal 45 residues, 1 to 45 (MSLISAVPLASSCVSKSLISSVREHTALRRAIATLQMSRRGKSVA), are a transit peptide targeting the chloroplast. 3 residues coordinate Mg(2+): aspartate 377, aspartate 381, and aspartate 529. The DDXXD motif motif lies at 377–381 (DDMYD).

This sequence belongs to the terpene synthase family. Tpsd subfamily. Mg(2+) serves as cofactor. Mn(2+) is required as a cofactor.

It is found in the plastid. Its subcellular location is the chloroplast. The catalysed reaction is (2E)-geranyl diphosphate = (+)-car-3-ene + diphosphate. Its pathway is terpene metabolism; oleoresin biosynthesis. The protein operates within secondary metabolite biosynthesis; terpenoid biosynthesis. Functionally, monoterpene synthase (TPS) involved in the biosynthesis of monoterpene natural products included in conifer oleoresin secretions and volatile emissions; these compounds contribute to biotic and abiotic stress defense against herbivores and pathogens. Catalyzes the conversion of (2E)-geranyl diphosphate (GPP) to (+)-3-carene. The polypeptide is (+)-3-carene synthase 2, chloroplastic (Pinus banksiana (Jack pine)).